Consider the following 437-residue polypeptide: Protein translocase subunit SecY (437 aa).

10 helical membrane passes run 19 to 39 (LFTL…IPGV), 69 to 89 (LLQI…SIIL), 122 to 142 (VALA…GALF), 157 to 177 (IFTT…VMWL), 189 to 209 (GMSI…LWAI), 219 to 239 (WIEF…VVFV), 275 to 295 (GVIP…IVQF), 318 to 338 (HIIL…AISF), 378 to 398 (GSLY…GFGA), and 400 to 420 (QNFP…LETV).

It belongs to the SecY/SEC61-alpha family. Component of the Sec protein translocase complex. Heterotrimer consisting of SecY, SecE and SecG subunits. The heterotrimers can form oligomers, although 1 heterotrimer is thought to be able to translocate proteins. Interacts with the ribosome. Interacts with SecDF, and other proteins may be involved. Interacts with SecA.

It is found in the cell membrane. In terms of biological role, the central subunit of the protein translocation channel SecYEG. Consists of two halves formed by TMs 1-5 and 6-10. These two domains form a lateral gate at the front which open onto the bilayer between TMs 2 and 7, and are clamped together by SecE at the back. The channel is closed by both a pore ring composed of hydrophobic SecY resides and a short helix (helix 2A) on the extracellular side of the membrane which forms a plug. The plug probably moves laterally to allow the channel to open. The ring and the pore may move independently. This is Protein translocase subunit SecY from Streptomyces lividans.